Here is a 415-residue protein sequence, read N- to C-terminus: CCA-adding enzyme (415 aa).

ATP contacts are provided by serine 52 and arginine 55. The CTP site is built by serine 52 and arginine 55. Mg(2+) is bound by residues aspartate 64, aspartate 66, and aspartate 116. ATP contacts are provided by histidine 139, lysine 159, and tyrosine 168. Residues histidine 139, lysine 159, and tyrosine 168 each coordinate CTP.

It belongs to the tRNA nucleotidyltransferase/poly(A) polymerase family. Archaeal CCA-adding enzyme subfamily. As to quaternary structure, homodimer. Mg(2+) serves as cofactor.

The enzyme catalyses a tRNA precursor + 2 CTP + ATP = a tRNA with a 3' CCA end + 3 diphosphate. The catalysed reaction is a tRNA with a 3' CCA end + 2 CTP + ATP = a tRNA with a 3' CCACCA end + 3 diphosphate. In terms of biological role, catalyzes the addition and repair of the essential 3'-terminal CCA sequence in tRNAs without using a nucleic acid template. Adds these three nucleotides in the order of C, C, and A to the tRNA nucleotide-73, using CTP and ATP as substrates and producing inorganic pyrophosphate. tRNA 3'-terminal CCA addition is required both for tRNA processing and repair. Also involved in tRNA surveillance by mediating tandem CCA addition to generate a CCACCA at the 3' terminus of unstable tRNAs. While stable tRNAs receive only 3'-terminal CCA, unstable tRNAs are marked with CCACCA and rapidly degraded. The sequence is that of CCA-adding enzyme from Pyrobaculum neutrophilum (strain DSM 2338 / JCM 9278 / NBRC 100436 / V24Sta) (Thermoproteus neutrophilus).